Reading from the N-terminus, the 207-residue chain is Arginine exporter protein ArgO (207 aa).

The next 6 helical transmembrane spans lie at 1–21 (MLSTFVQGFFLSAAMILPLGP), 42–62 (LCAISDGFLIGVGVFGGSALL), 67–87 (LLLQFVTWGGVAFLFWYGWGA), 111–131 (VVAIIFAVTWLNPHVYLDTIV), 150–170 (FGAASASVSWFFSLSLLAAWF), and 185–205 (GFICIIMWYIAWQLAKQGLLI).

It belongs to the LysE/ArgO transporter (TC 2.A.75) family.

Its subcellular location is the cell inner membrane. It catalyses the reaction L-arginine(in) = L-arginine(out). Functionally, involved in the export of arginine. Important to control the intracellular level of arginine and the correct balance between arginine and lysine. The chain is Arginine exporter protein ArgO from Photorhabdus laumondii subsp. laumondii (strain DSM 15139 / CIP 105565 / TT01) (Photorhabdus luminescens subsp. laumondii).